A 159-amino-acid chain; its full sequence is Small ribosomal subunit protein bS6 (159 aa).

Residues 93 to 151 show a composition bias toward basic and acidic residues; that stretch reads VDEHEEGPSAMMRKADRDRERDDRGPREGGFRGDREGRGDREGGGFRGDRGPRRPREDA. A disordered region spans residues 93 to 159; it reads VDEHEEGPSA…DADTAAASEE (67 aa).

Belongs to the bacterial ribosomal protein bS6 family.

Binds together with bS18 to 16S ribosomal RNA. The polypeptide is Small ribosomal subunit protein bS6 (Rhodopseudomonas palustris (strain HaA2)).